Here is a 170-residue protein sequence, read N- to C-terminus: Acetyl-CoA decarbonylase/synthase complex subunit epsilon 1 (170 aa).

This sequence belongs to the CdhB family. Heterotetramer of two alpha and two epsilon subunits. The ACDS complex is made up of alpha, epsilon, beta, gamma and delta subunits with a probable stoichiometry of (alpha(2)epsilon(2))(4)-beta(8)-(gamma(1)delta(1))(8).

It participates in one-carbon metabolism; methanogenesis from acetate. In terms of biological role, part of a complex that catalyzes the reversible cleavage of acetyl-CoA, allowing growth on acetate as sole source of carbon and energy. The alpha-epsilon subcomponent functions as a carbon monoxide dehydrogenase. The precise role of the epsilon subunit is unclear; it may have a stabilizing role within the alpha(2)epsilon(2) component and/or be involved in electron transfer to FAD during a potential FAD-mediated CO oxidation. This Methanosarcina acetivorans (strain ATCC 35395 / DSM 2834 / JCM 12185 / C2A) protein is Acetyl-CoA decarbonylase/synthase complex subunit epsilon 1 (cdhB1).